A 310-amino-acid polypeptide reads, in one-letter code: Serine protease 30 (310 aa).

The signal sequence occupies residues 1-21 (MESRARCIFLLLLQILTRARG). The propeptide at 22 to 36 (DILPSVCGHSRDAGK) is activation peptide. A Peptidase S1 domain is found at 37 to 277 (IVGGQDALEG…YVDWIQRILA (241 aa)). A disulfide bridge connects residues C63 and C79. Active-site charge relay system residues include H78 and D128. 3 disulfides stabilise this stretch: C161–C235, C191–C214, and C225–C253. S229 (charge relay system) is an active-site residue. N-linked (GlcNAc...) asparagine glycosylation is found at N238 and N279. Residue S281 is the site of GPI-anchor amidated serine attachment. The propeptide at 282–310 (DAYGYHSSASAAYQMLLPVLLAVALPGSL) is removed in mature form.

The protein belongs to the peptidase S1 family. In terms of tissue distribution, expressed primarily in distal gut.

It is found in the cell membrane. Its activity is regulated as follows. Inhibited by aprotinin, leupeptin, benzamidine and soybean trypsin inhibitor. Partially inhibited by PMSF and DFP. Selectively cleaves synthetic peptide substrates of trypsin. Activates the epithelial sodium channel ENaC. The sequence is that of Serine protease 30 (Prss30) from Mus musculus (Mouse).